Reading from the N-terminus, the 219-residue chain is MSGLSGPPARRGPFPLALLLLFLLGPRLVLAISFHLPINSRKCLREEIHKDLLVTGAYEISDQSGGAGGLRSHLKITDSAGHILYSKEDATKGKFAFTTEDYDMFEVCFESKGTGRIPDQLVILDMKHGVEAKNYEEIAKVEKLKPLEVELRRLEDLSESIVNDFAYMKKREEEMRDTNESTNTRVLYFSIFSMFCLIGLATWQVFYLRRFFKAKKLIE.

The N-terminal stretch at methionine 1–alanine 31 is a signal peptide. Positions methionine 1 to glutamate 142 are required for interaction with STX17. Over isoleucine 32 to arginine 185 the chain is Lumenal. A GOLD domain is found at arginine 41–serine 193. The interval leucine 147–threonine 178 is required for TMED10 and TMED2 cis-Golgi network localization. Dimethylated arginine is present on residues arginine 171 and arginine 176. An N-linked (GlcNAc...) asparagine glycan is attached at asparagine 179. A helical membrane pass occupies residues valine 186 to phenylalanine 206. The interval glutamine 204–glutamate 219 is interaction with COPG1. Residues tyrosine 207 to glutamate 219 are Cytoplasmic-facing. Residues tyrosine 207–glutamate 219 are interaction with ARF1 and IL1B. Residues phenylalanine 211–phenylalanine 212 carry the COPII vesicle coat-binding motif. The COPI vesicle coat-binding motif lies at phenylalanine 211–glutamate 219.

It belongs to the EMP24/GP25L family. As to quaternary structure, predominantly dimeric and to a lesser extent monomeric in the ER. Monomer and dimer in ERGIC and cis-Golgi network. Forms homooligomer (via GOLD domain); the assembly is promoted by direct binding with leaderless cargos and may form a protein channel that facilitates cargo entry into the ERGIC. Forms heterooligomeric complexes with other members of the p24 family such as TMED2, TMED7 and TMED9. Interacts (via GOLD domain) with TMED2 (via GOLD domain); the complex is required for export of TMED10 from the ER to the cis-Golgi network; the complex is proposed to be involved in cis-Golgi network dynamics and / or biogenesis. Associates with the COPI vesicle coat subunits (coatomer). Tetramerization of the cytoplasmic domain at the Golgi membrane in vitro; the complex is proposed to interact with COPI coatomer and induce budding of the vesicles. Interacts with COPG1; the interaction involves TMED10 homodimer. Interacts with ARF1 (GDP-bound); the interaction probably involves a TMED10 oligomer. Interacts with SEC23A, SEC24B, SEC24C and SEC24D components of the coat protein complex II/COPII, indicative of an association of TMED10 with the COPII vesicle coat. Interacts with CD59. Interacts with MPPE1/PGAP5; the complex might recruit and sort GPI-anchored proteins to the ER-exit site, or the interaction might lead to recycling of PGAP5 between the ER and the Golgi. Interacts with F2LR1/PAR2. Interacts with KDELR2/ERD2; the interaction is disrupted by KDELR2 ligand. Found in a complex composed at least of SURF4, TMED2 and TMED10. Associates with the presenilin-dependent gamma-secretase complex. Interacts with STX17; the interaction is direct. Interacts with IL-1; the interaction is direct. Interacts with RAB21 (active GTP-bound form); the interaction is indirect and regulates TMED10 abundance and localization at the Golgi.

It is found in the endoplasmic reticulum membrane. It localises to the endoplasmic reticulum-Golgi intermediate compartment membrane. The protein localises to the golgi apparatus membrane. Its subcellular location is the golgi apparatus. The protein resides in the cis-Golgi network membrane. It is found in the trans-Golgi network membrane. It localises to the cytoplasmic vesicle. The protein localises to the secretory vesicle membrane. Its subcellular location is the cell membrane. The protein resides in the melanosome. Its function is as follows. Cargo receptor involved in protein vesicular trafficking and quality control in the endoplasmic reticulum (ER) and Golgi. The p24 protein family is a group of transmembrane proteins that bind coat protein complex I/COPI and coat protein complex II/COPII involved in vesicular trafficking between the membranes. Acts at the lumenal side for incorporation of secretory cargo molecules into transport vesicles and involved in vesicle coat formation at the cytoplasmic side. Mainly functions in the early secretory pathway and cycles between the ER, ER-Golgi intermediate compartment (ERGIC) and Golgi, mediating cargo transport through COPI and COPII-coated vesicles. In COPII vesicle-mediated anterograde transport, involved in the transport of GPI-anchored proteins by acting together with TMED2 as their cargo receptor; the function specifically implies SEC24C and SEC24D of the COPII vesicle coat and lipid raft-like microdomains of the ER. Recognizes GPI anchors structural remodeled in the ER by the GPI inositol-deacylase/PGAP1 and the metallophosphoesterase MPPE1/PGAP5. In COPI vesicle-mediated retrograde transport, involved in the biogenesis of COPI vesicles and vesicle coat recruitment. Involved in trafficking of amyloid beta A4 protein and soluble APP-beta release (independent from the modulation of gamma-secretase activity). Involved in the KDELR2-mediated retrograde transport of the toxin A subunit (CTX-A-K63)together with COPI and the COOH terminus of KDELR2. On Golgi membranes, acts as a primary receptor for ARF1-GDP, a GTP-binding protein involved in COPI-vesicle formation. Increases coatomer-dependent GTPase-activating activity of ARFGAP2 which mediates the hydrolysis of ARF1-bound GTP and therefore modulates protein trafficking from the Golgi apparatus. Involved in the exocytic trafficking of G protein-coupled receptors F2LR1/PAR2 (trypsin and tryspin-like enzyme receptor), OPRM1 (opioid receptor) and P2RY4 (UTD and UDP receptor) from the Golgi to the plasma membrane, thus contributing to receptor resensitization. In addition to its cargo receptor activity, may also act as a protein channel after oligomerization, facilitating the post-translational entry of leaderless cytoplasmic cargo into the ERGIC. Involved in the translocation into ERGIC, the vesicle entry and the secretion of leaderless cargos (lacking the secretion signal sequence), including the mature form of interleukin 1/IL-1 family members, the alpha-crystallin B chain HSPB5, the carbohydrate-binding proteins galectin-1/LGALS1 and galectin-3/LGALS3, the microtubule-associated protein Tau/MAPT, and the annexin A1/ANXA1; the translocation process is dependent on cargo protein unfolding and enhanced by chaperones HSP90AB1 and HSP90B1/GRP9. Could also associates with the presenilin-dependent gamma-secretase complex in order to regulate gamma-cleavages of the amyloid beta A4 protein to yield amyloid-beta 40/Abeta40. This Homo sapiens (Human) protein is Transmembrane emp24 domain-containing protein 10.